The chain runs to 172 residues: UPF0102 protein AM1_3954 (172 aa).

The protein belongs to the UPF0102 family.

This is UPF0102 protein AM1_3954 from Acaryochloris marina (strain MBIC 11017).